The following is a 398-amino-acid chain: Enoyl-[acyl-carrier-protein] reductase [NADH] (398 aa).

Residues 48–53 (GASTGY), 74–75 (FE), 111–112 (DA), and 139–140 (LA) each bind NAD(+). Tyr-225 is a binding site for substrate. Residue Tyr-235 is the Proton donor of the active site. NAD(+)-binding positions include Lys-244 and 273–275 (VVT).

The protein belongs to the TER reductase family. In terms of assembly, monomer.

The enzyme catalyses a 2,3-saturated acyl-[ACP] + NAD(+) = a (2E)-enoyl-[ACP] + NADH + H(+). The protein operates within lipid metabolism; fatty acid biosynthesis. In terms of biological role, involved in the final reduction of the elongation cycle of fatty acid synthesis (FAS II). Catalyzes the reduction of a carbon-carbon double bond in an enoyl moiety that is covalently linked to an acyl carrier protein (ACP). This Paraburkholderia phytofirmans (strain DSM 17436 / LMG 22146 / PsJN) (Burkholderia phytofirmans) protein is Enoyl-[acyl-carrier-protein] reductase [NADH].